Here is a 269-residue protein sequence, read N- to C-terminus: Protein OPG079 (269 aa).

This sequence belongs to the orthopoxvirus OPG079 family. As to quaternary structure, homoomultimer (Potential). Interacts with the small subunit of ribonucleotide reductase. Interacts with host FAM111A; this interaction protomtes OPG079 degradation through autophagy.

It localises to the host cytoplasm. Functionally, plays an essential role in viral DNA replication. Binds to ssDNA with high affinity and localizes to cytoplasmic factories where nascent viral genomes accumulate. May disrupt loops, hairpins and other secondary structures present on ssDNA to reduce and eliminate pausing of viral DNA polymerase at specific sites during elongation. The protein is Protein OPG079 (OPG079) of Variola virus (isolate Human/India/Ind3/1967) (VARV).